The sequence spans 488 residues: Cytochrome P450 family 716 subfamily AD polypeptide 2 (488 aa).

The chain crosses the membrane as a helical span at residues 5 to 25 (LLLLSTLLILTLCCHFFYLFI). C433 contacts heme.

This sequence belongs to the cytochrome P450 family. It depends on heme as a cofactor. In terms of tissue distribution, expressed in maturing fruits and in juice vesicles.

It is found in the membrane. The catalysed reaction is (1R,2R,3S,8R,10R,11R,15S,16S)-3-(acetyloxy)-15-[(4R)-4-[(2S)-3,3-dimethyloxiran-2-yl]-1,4-dihydroxybutan-2-yl]-2,7,7,11,16-pentamethyl-5-oxo-6-oxatetracyclo[9.7.0.0(2,8).0(12,16)]octadec-12-en-10-yl acetate + reduced [NADPH--hemoprotein reductase] + O2 = (1R,2R,3S,8R,10R,11R,15S,16S)-3-(acetyloxy)-15-(1-hydroxy-4-oxobutan-2-yl)-2,7,7,11,16-pentamethyl-5-oxo-6-oxatetracyclo[9.7.0.0(2,8).0(12,16)]octadec-12-en-10-yl acetate + 2-methylpropanoate + oxidized [NADPH--hemoprotein reductase] + H2O + 2 H(+). It participates in secondary metabolite biosynthesis; terpenoid biosynthesis. In terms of biological role, monooxygenase involved in the biosynthesis of limonoids triterpene natural products such as limonin, a compound with insecticidal activity responsible for the bitter taste in citrus. Catalyzes the formation of (1R,2R,3S,8R,10R,11R,15S,16S)-3-(acetyloxy)-15-(1-hydroxy-4-oxobutan-2-yl)-2,7,7,11,16-pentamethyl-5-oxo-6-oxatetracyclo[9.7.0.0(2,8).0(12,16)]octadec-12-en-10-yl acetate. The sequence is that of Cytochrome P450 family 716 subfamily AD polypeptide 2 from Citrus sinensis (Sweet orange).